The sequence spans 106 residues: Follitropin subunit beta (106 aa).

Intrachain disulfides connect cysteine 1-cysteine 49, cysteine 15-cysteine 64, cysteine 18-cysteine 102, cysteine 26-cysteine 80, cysteine 30-cysteine 82, and cysteine 85-cysteine 92. N-linked (GlcNAc...) asparagine glycosylation is found at asparagine 5 and asparagine 22.

Belongs to the glycoprotein hormones subunit beta family. Heterodimer. The active follitropin is a heterodimer composed of an alpha chain/CGA shared with other hormones and a unique beta chain/FSHB shown here.

It localises to the secreted. In terms of biological role, together with the alpha chain CGA constitutes follitropin, the follicle-stimulating hormone, and provides its biological specificity to the hormone heterodimer. Binds FSHR, a G protein-coupled receptor, on target cells to activate downstream signaling pathways. Follitropin is involved in follicle development and spermatogenesis in reproductive organs. The protein is Follitropin subunit beta (FSHB) of Struthio camelus (Common ostrich).